The following is a 299-amino-acid chain: Glycine--tRNA ligase alpha subunit (299 aa).

This sequence belongs to the class-II aminoacyl-tRNA synthetase family. As to quaternary structure, tetramer of two alpha and two beta subunits.

Its subcellular location is the cytoplasm. The enzyme catalyses tRNA(Gly) + glycine + ATP = glycyl-tRNA(Gly) + AMP + diphosphate. The polypeptide is Glycine--tRNA ligase alpha subunit (Dictyoglomus thermophilum (strain ATCC 35947 / DSM 3960 / H-6-12)).